Reading from the N-terminus, the 238-residue chain is 15,16-dihydrobiliverdin:ferredoxin oxidoreductase (238 aa).

This sequence belongs to the HY2 family.

It catalyses the reaction 15,16-dihydrobiliverdin + oxidized 2[4Fe-4S]-[ferredoxin] = biliverdin IXalpha + reduced 2[4Fe-4S]-[ferredoxin] + 2 H(+). Its function is as follows. Catalyzes the two-electron reduction of biliverdin IX-alpha at the C15 methine bridge. In Prochlorococcus marinus (strain MIT 9211), this protein is 15,16-dihydrobiliverdin:ferredoxin oxidoreductase.